The primary structure comprises 221 residues: Guanylate kinase (221 aa).

Residues 18–196 (GFLFILSSPS…SASLIKSIYL (179 aa)) enclose the Guanylate kinase-like domain. 25 to 32 (SPSGAGKS) provides a ligand contact to ATP.

The protein belongs to the guanylate kinase family.

It is found in the cytoplasm. The catalysed reaction is GMP + ATP = GDP + ADP. Functionally, essential for recycling GMP and indirectly, cGMP. The polypeptide is Guanylate kinase (Bartonella quintana (strain Toulouse) (Rochalimaea quintana)).